The chain runs to 206 residues: Ancillary SecYEG translocon subunit (206 aa).

At 1–23 (MEIYENENDQVEAVKRFFAENGK) the chain is on the cytoplasmic side. Residues 24–43 (ALAVGVILGVGALIGWRYWN) traverse the membrane as a helical segment. Over 44–206 (SHQVDSARSA…MQMKINNLSI (163 aa)) the chain is Periplasmic.

The protein belongs to the YfgM family. In terms of assembly, interacts with the SecYEG translocon. Forms a complex with PpiD. Also interacts with RcsB.

It localises to the cell inner membrane. Its activity is regulated as follows. Is stable during exponential growth and degraded in stationary phase by the essential FtsH protease. Degradation is influenced by the alarmone (p)ppGpp, but not by inorganic polyphosphate (polyP), RpoS, RcsB or PpiD. May mediate protein transfer from the SecYEG translocon to the periplasmic chaperone network via its periplasmic C-terminal region. In addition, at the cytosolic site, acts as a negative regulator of RcsB. In stationary phase, the FtsH-dependent degradation of YfgM ensures the release of RcsB from YfgM and thereby permits cellular protection by the Rcs phosphorelay system. May coordinate stress responses across the inner membrane via a dynamic protein-protein interaction network inside and outside of the membrane. The polypeptide is Ancillary SecYEG translocon subunit (yfgM) (Escherichia coli (strain K12)).